The following is a 285-amino-acid chain: Transmembrane protein 53-B (285 aa).

The helical transmembrane segment at 165–185 (FLALAAFAIMVIILRIVLYPV) threads the bilayer.

It belongs to the TMEM53 family.

The protein localises to the nucleus outer membrane. Functionally, ensures normal bone formation, through the negative regulation of bone morphogenetic protein (BMP) signaling in osteoblast lineage cells by blocking cytoplasm-nucleus translocation of phosphorylated SMAD proteins. The protein is Transmembrane protein 53-B (tmem53-b) of Xenopus laevis (African clawed frog).